Reading from the N-terminus, the 70-residue chain is Phycobilisome 8.1 kDa linker polypeptide, phycocyanin-associated, rod (70 aa).

Residues 5–63 (SRSFQVEVSGLHQNEVTNQNNYPIRSSGSVFITIPFSRFNEELQRINRLGGKIVNIQPL) form the CpcD-like domain.

This sequence belongs to the phycobilisome linker protein family.

It localises to the cellular thylakoid membrane. Rod linker protein, associated with phycocyanin. Linker polypeptides determine the state of aggregation and the location of the disk-shaped phycobiliprotein units within the phycobilisome and modulate their spectroscopic properties in order to mediate a directed and optimal energy transfer. The chain is Phycobilisome 8.1 kDa linker polypeptide, phycocyanin-associated, rod (cpcD3) from Microchaete diplosiphon (Fremyella diplosiphon).